The following is a 621-amino-acid chain: Membrane protein insertase YidC (621 aa).

6 consecutive transmembrane segments (helical) span residues methionine 1–isoleucine 21, glycine 363–valine 383, methionine 436–valine 456, isoleucine 486–leucine 506, leucine 527–leucine 547, and tyrosine 549–threonine 569.

This sequence belongs to the OXA1/ALB3/YidC family. Type 1 subfamily. As to quaternary structure, interacts with the Sec translocase complex via SecD. Specifically interacts with transmembrane segments of nascent integral membrane proteins during membrane integration.

The protein localises to the cell inner membrane. Required for the insertion and/or proper folding and/or complex formation of integral membrane proteins into the membrane. Involved in integration of membrane proteins that insert both dependently and independently of the Sec translocase complex, as well as at least some lipoproteins. Aids folding of multispanning membrane proteins. This chain is Membrane protein insertase YidC, found in Phocaeicola vulgatus (strain ATCC 8482 / DSM 1447 / JCM 5826 / CCUG 4940 / NBRC 14291 / NCTC 11154) (Bacteroides vulgatus).